The primary structure comprises 84 residues: Toxin Tst1 (84 aa).

The N-terminal stretch at 1 to 19 (MKGMILFISCLLLIDIVVG) is a signal peptide. One can recognise an LCN-type CS-alpha/beta domain in the interval 21–82 (KEGYLMDHEG…VWDRATNKCG (62 aa)). Intrachain disulfides connect cysteine 31-cysteine 81, cysteine 35-cysteine 57, cysteine 43-cysteine 62, and cysteine 47-cysteine 64. At cysteine 81 the chain carries Cysteine amide.

As to expression, expressed by the venom gland.

Its subcellular location is the secreted. Functionally, beta toxins bind voltage-independently at site-4 of sodium channels (Nav) and shift the voltage of activation toward more negative potentials thereby affecting sodium channel activation and promoting spontaneous and repetitive firing. This toxin is active only on mammals. Is toxic to mice. The protein is Toxin Tst1 of Tityus stigmurus (Brazilian scorpion).